Consider the following 220-residue polypeptide: MIAQCTVDYLGRLTAHLPSARRLLLFKADGSVSVHADDRAYKPLNWMSPPCWLTEDVAGASPAWVVENKAGEQLRITVEEVEHDSCHDLGVDPGLVKDGVEAHLQTLLAEQVQLLGEGYTLVRCEYMTAIGPVDLLCRDEQGGSVAVEIKRRGEIDGVEQLTRYLALLNRNSVLAPVRGVFAAQHIKPQARTLATDRGIRCVTLDYDKMRGMDSDEYRLF.

It belongs to the NucS endonuclease family.

The protein resides in the cytoplasm. Its function is as follows. Cleaves both 3' and 5' ssDNA extremities of branched DNA structures. The protein is Endonuclease NucS of Mycobacterium leprae (strain TN).